The sequence spans 586 residues: MKSFATTVLLVTPGIYAAALSGRQGQAINSSCKVIPGDTAWPSRQIWSQLNDTLDGRLIQSTPQAAVCRPGGYGSISENGTECTTLKEDWDYAKAFLDSAVEIMNPWYQNTSCSPFYRVDQPCTLGNYVSYAIPVSGPEDVVTAINFTQTHNVRLVIKNTGHDYLGKSTGTGGLSLWTHNLQSKQIVNYTSPAYSGPAIKVGAGVTGGEALLHASQFGYRLVSGDCSTVGYAGGYSSGGGHSLLNSVHGMAADNVLEWEVVTADGRHLVASATQNSDLYWALSGGGAGNLAVVLSMTAKVHPDGLVGAATLSFNATSSPSNTSYISAINAWWTFLPTLIDAGASPSFNIYTNNFLIYNTTAPGKSAQDMSTLYAPYLSTLSSLSIPYTFQTYTAPSFLQHYNATDGPLPYGPYVASQLFNSRMIPRSLSSSPSNLTTAILSSVATDAPGIWQLGCLGINVNSTRISHPDNAVAPHWRTAMAVCLEFSLYDWAIPEEEMVARRQHLADVIHPAIVKVTPGSGAYLNEADPLVYPVGEDGWKDAFYGANYERLRGLKREWDPERVFYAYTAPGSEEWVSDAEGRLCRV.

A signal peptide spans 1 to 17 (MKSFATTVLLVTPGIYA). Asparagine 29, asparagine 51, asparagine 79, asparagine 110, asparagine 146, asparagine 188, asparagine 314, asparagine 321, asparagine 358, asparagine 402, asparagine 434, and asparagine 461 each carry an N-linked (GlcNAc...) asparagine glycan. In terms of domain architecture, FAD-binding PCMH-type spans 124–303 (TLGNYVSYAI…LSMTAKVHPD (180 aa)).

This sequence belongs to the oxygen-dependent FAD-linked oxidoreductase family.

The catalysed reaction is betaenone C = betaenone A. The protein operates within mycotoxin biosynthesis. FAD-linked oxidoreductase; part of the gene cluster that mediates the biosynthesis of betaenones, phytotoxic polyketides involved in leaf spot disease in sugar beets. The first step of the pathway is the synthesis of dehydroprobetaenone I by the polyketide synthase bet1 and the enoyl reductase bet3 via condensation of one acetyl-CoA starter unit with 7 malonyl-CoA units and 5 methylations. The C-terminal reductase (R) domain of bet1 catalyzes the reductive release of the polyketide chain. Because bet1 lacks a designated enoylreductase (ER) domain, the required activity is provided the enoyl reductase bet3. The short-chain dehydrogenase/reductase bet4 then catalyzes reduction of dehydroprobetaenone I to probetaenone I. The cytochrome P450 monooxygenase bet2 catalyzes successive epoxidation, oxidation (resulting from epoxide opening) and hydroxylation to install a tertiary alcohol in the decaline ring to yield betaenone C from dehydroprobetaenone I and betaenone B from probetaenone I. The FAD-linked oxidoreductase (orf1) is probably responsible for the conversion of betaenone C to betaenone A via an intramolecular aldol reaction between C-1 and C-17 to form the bridged tricyclic system in betaenone A. This Neocamarosporium betae (Beet black rot fungus) protein is FAD-linked oxidoreductase orf1.